Reading from the N-terminus, the 413-residue chain is ATP phosphoribosyltransferase 2, chloroplastic (413 aa).

Residues 1–57 (MPISIPLNATLQYSSPSSSSSSSSLVPSSPLFSPIPSTTVSLTGIRQRCLRMVTSCV) constitute a chloroplast transit peptide.

Belongs to the ATP phosphoribosyltransferase family. Long subfamily. It depends on Mg(2+) as a cofactor.

The protein localises to the plastid. It localises to the chloroplast. The catalysed reaction is 1-(5-phospho-beta-D-ribosyl)-ATP + diphosphate = 5-phospho-alpha-D-ribose 1-diphosphate + ATP. It participates in amino-acid biosynthesis; L-histidine biosynthesis; L-histidine from 5-phospho-alpha-D-ribose 1-diphosphate: step 1/9. With respect to regulation, feedback inhibited by L-histidine. Catalyzes the condensation of ATP and 5-phosphoribose 1-diphosphate to form N'-(5'-phosphoribosyl)-ATP (PR-ATP). This is ATP phosphoribosyltransferase 2, chloroplastic (HISN1B) from Arabidopsis thaliana (Mouse-ear cress).